The following is a 225-amino-acid chain: THAP domain-containing protein 1 A (225 aa).

The segment at 5–57 (CSAYGCKNRYDKDKPISFHKFPLKRPLLCKKWEAAVRRAEFKPTKYSSICSDH) adopts a THAP-type zinc-finger fold. Residues 139–194 (VEDTVHQRRRIQQLEEQVDKLRKKLKIANQKCRRQERSLEKLEREVSEYREAKGSG) adopt a coiled-coil conformation.

The protein belongs to the THAP1 family.

The protein localises to the nucleus. Its subcellular location is the nucleoplasm. Functionally, DNA-binding transcription regulator that regulates endothelial cell proliferation and G1/S cell-cycle progression. Specifically binds the 5'-[AT]NTNN[GT]GGCA[AGT]-3' core DNA sequence and acts by modulating expression of pRB-E2F cell-cycle target genes. The protein is THAP domain-containing protein 1 A (thap1-a) of Xenopus laevis (African clawed frog).